The primary structure comprises 814 residues: MSRPESRSGNASTPQGTSVLKADDGGSGQTPGGSTENSVAYRYVAVQQMTSCRDHIEYQLTVREQPKQSRMCGVGEKADRRPIDPAPIVQLRVVTHDRPIRQSDPVGSASVAPPVERRPGQGAAAPQTPGVRRGLPVTTALGDGWEDKAWYLENPYYFMYAMLCNADTDEELHLLNDGKTRYTSGSCVSCLYHLKDIDGSHQGFFVFPDLSIRVEGRYRLKLCLFETIGHSVHHCKSIYSDPFHVYTAKRFPGMEESTRLSKSFAEQGLKVRVRKHPRSRRRGSKRTKDESDASDETPLARHVSPKRARASDVLPMSGLPMSQPIASSRMPRSMDDRFERADYDRTPSMASAYYDVKGAPPSRHAPWEEEEVLRLRESRAWDPMYDAPSALYSHHAREDRVEDRRLPPRDFADGRYMDGDYPPHTRSAAAPLSSMSARAGPSEYSEHVRSVYLRDDPVRSMHGSPHRLSAALPPLPPPLSKTPSHPALVGRGYPESSASLTPAYSRNYPSVPAPAPAPAPMPMRPAPLLSRSYDHIGQQSSGRIYDDYGPRPNVVAHYSGSYDPRDALARGFSPPSPQPGRRSPYASHHPPTQWRSGPPSPSRPSDYHLGRASAVERGYAAARRSPIPSARGIDTPPEAYAGFESNPFPRRSFGVPDAGRPAATYDAPRAPPADLYAPDEGPPSGRLGGIGFAPSSRERLILPPLPVPSPLSAHRGELTPLGTRDRDREAAYIAMPRDRDQGLAPTERYLSPSGYNPRAGELDQRDREWEWECERERERERERKRGPASPEYRRDFAQATMPSKPSSRGHNQPY.

Disordered stretches follow at residues 1-36, 96-134, 267-333, 407-441, 457-501, and 539-814; these read MSRPESRSGNASTPQGTSVLKADDGGSGQTPGGSTE, HDRPIRQSDPVGSASVAPPVERRPGQGAAAPQTPGVRRG, QGLK…MPRS, PPRDFADGRYMDGDYPPHTRSAAAPLSSMSARAGP, PVRS…ASLT, and QSSG…NQPY. A compositionally biased stretch (polar residues) spans 7 to 18; sequence RSGNASTPQGTS. Residues 53 to 274 form the Velvet domain; that stretch reads RDHIEYQLTV…AEQGLKVRVR (222 aa). Over residues 271–285 the composition is skewed to basic residues; sequence VRVRKHPRSRRRGSK. Residues 407-423 are compositionally biased toward basic and acidic residues; that stretch reads PPRDFADGRYMDGDYPP. The Nuclear localization signal motif lies at 438-445; sequence RAGPSEYS. The span at 620–631 shows a compositional bias: low complexity; it reads AAARRSPIPSAR. Composition is skewed to basic and acidic residues over residues 723-741 and 760-796; these read TRDRDREAAYIAMPRDRDQ and GELDQRDREWEWECERERERERERKRGPASPEYRRDF. The segment covering 800 to 814 has biased composition (polar residues); the sequence is TMPSKPSSRGHNQPY.

Belongs to the velvet family. VosA subfamily. Forms a heterodimeric complex with velB; the formation of the VEL2-VOS1 complex is light-dependent.

It localises to the nucleus. Functionally, component of the velB-VosA heterodimeric complex that plays a dual role in activating genes associated with spore maturation and repressing certain development-associated genes. The complex binds DNA through the DNA-binding domain of vosA that recognizes an 11-nucleotide consensus sequence 5'-CTGGCCGCGGC-3' consisting of two motifs in the promoters of key developmental regulatory genes. Required for gall induction and teliospore formation on seedlings. In Mycosarcoma maydis (Corn smut fungus), this protein is Spore development regulator umv1.